Consider the following 4499-residue polypeptide: MSIFWEVPNAQGEAPCPRSGHSFTVLGERFVLFGGCGRKDGKAAAFNDLYELDTSDPDEYKWKELVVANAPPPRARHAAIALDDKRLLVFGGLNKRIRYNDVWLFNYDDKSWTCMEVEGAAPEPRAHFTATRFGSRVFIFGGYGGSGQVYNEMWVLHFGEDGFRWQNITESIEGTGPAPRFDHSAFIYPVTPNSDTYDKLLIMGGRDLSQMYQDSHMLDLNKMAWENETQPPTLPYEICNNVCDGIESVPYHKVFSFGGRKGMMQYLNTVEVMDCGTQMWSTPPVDHGVAPVGREDTAWVFDVKTCSLLIFGGWANRWLGDLHKLNVSPIIGPPYACTAIQPEMGPVFGSTELVIRGLRFRDGKVQVKFGLSEKNEVVVEGTYVDQETIRVQTPNYEQFGALTVDVRVSINGEGWTVNKIKYAYFANTAARNCIAYGPGLLAETISGVEVPFIIQAKDTLNDKRTSGGDVFKVTVVSADGKNEGVSRVRDLQNGQYEVQYAAPTAGPYLIHVAFNELGTSDFVPIRGSPFTVKCTDSWTKHRVMGAAPAKRKGATICTMGNELVLYGGDKSGVTVLNTEGAEWRWSPATVSGSTPPDRTAHSTVVLSDGELVVFGGINLADQNDLNDIYYLRKQGEGWVWSCPSESRPYIRHPKGAAAVSAEPSAEPAAEPAAEPAAEPDADAPAAEPAAEGEEGAVPAEGEEGAEGATGSRPVSAKPAPAAAAPAAEALPELPVSARNSHVAVAIDKDLYVMMGDHDGDLMTELAMVDTSDRTCAHWLEPILKGDVPVPRKACAAAATGNTIVLFGGQTQNADGEATVTGDLVIMEVTGPNSIQCAVNPAAPGASGSPAARYGAVMQEFSNGKLFLHGGMDAASKPLNDGWLFDVPSKTWQCVYVGSSDVVLPTGQLATLSGNRIVLVSAAVGSPKLDSVQSLDFQELRDQAGVHAKMRASTETLLKGLEDWVDTQAHGMELARSPEKLSKDFENGLRKVMDALFQVKSQRSQTDLLIDQLHEAFAQLAEEKVPGINKMEKRLEAAAHKWDEIKKAQPQVKTDVEPIQAAKGEDIKKEIETFAAKVRNYRADFRRRGFFKYATGFDGAYPLLDAAAHELAELKKECDRLSELASVFEFPQAIEPVTVAIKETVEDLVMVKDVWDTAVLCELQFQDWRQTLWSDIRTDIMEEGAKQFVKEVKSLHKKVRDEDVFRGVDQVVKNFLVSVPLVADLRSPAMRDRHWEQLMATTKMTFNVKDPNFKLDDLLALELHKFEEEVGEIVDRAQKEEKMEIAIRKLNDTWTRVEFQFHRHKDYDVHTVKMAEEDFEALEDNQVQVQGMIANRYMATFKDEILGWQKKLNDVADVNQIMAEIQRTWAYLESLFIHSEEVKKELPQATERFAAIDTEVKKVLREFQQLKNCVSCCNREGLYANLETQERELEICKKALNDYMESKRRAFPRFYFVSSADLLDILSNGNNPMRVQIHMNKCFQAIDNVRLDSEEVVPGRRPKALGMESCVGIEYVPFSSLPLENKVEQYMNDIIAKMRNDVRMVLKASVEDYPSKPRDKWLFDWPSQIILVVNQIYWCLEVEQAFTEMARGDKGAMSKYNEFQVKQLTKLIEVTRTDLSKPDRQKIMNMITIDAHSRDMVLAGADQPDSFQWVSQLRSYWDRDISDCRIRICDASFPYGYEYLGNGPRLVITPLTDRIYITATQACWLSLGTAPAGPAGTGKTETTKDLSAQLGKSVYVFNCSPEMDYRTMGDIFKGLAASGSWGCFDEFNRLVPEVLSVCSVQYKCVTDSQKKKTMLPGRGLEYIKDGVKHPAVEHWSFIAADGVEMPLEEGTSAFITMNPGYIGRAELPESLKALFRPITVMVPDRQLIMENMLMAEGFVEAKMLAKKFASLYYLLEDLLSPQKHYDWGLRAIKSVLVVAGSLLRAEAGQVEADVLFRALRDFNIPKILAQDMVIFMGLLNDLFPGIDPPRKRDMEFEDVIVSTIKDLGLTPEDDFVLRVVQFSELLAIRHCVFLMGPTGTGRTECYRVLAKAITKGCNNPVNDYLKMTNKKKVVIRDINPKSISTYELYGQVNQATREWKDGLLSYYMRDVANMPGDDPKWLLLDGDLDANWIESMNSVMDDNRLLTLPSNERIRVLPHMKLIFEIRDLKFATPATATRAGILYISEGQQWHNMAMSWINRVVKPYAERAKWKDPQLPCTWLREMFDKYIPPTLLEMKKSYSHITPLAQMNFISTLVNIMEGVLKPENLSNKADQAMFEMYFVFAMIWAFGGGLVEKDGIPYRRNFDKWFKQTWTTVKIPGKGTVYDYFVNPKTQKFQPWAELVTDIDYDGSRPMSTVFVPTAETSSLRFFLDMMVDLRKPIMFVGGAGVGKTQLVKGKLGSLNEEQISLSISFNYFTDVVSFQKVLESPLEKQPAGINYGPPGTKQLIYFVDDLNMPKLDLYETAMPISLIRQHLGWGHWFDRAKLTPKNINNTQYVACMNPTAGSFIINPRLQRLFMTLAVDFPGQDSLMKIYGTFLQGHLKKFSESIQDMGTKILQAALALHDRVSQTFRKTAINFHYEFTVRHLANVFQGLLMSTPEAFNSPTKWGKLWLHESERVYADRLVSLYDLDAYNKAATAIAKKYFSVADIDDYYKKKDPKPLIFCHFARGLADKAYDEVADYTSLYKTLTEALNEYNETNAAMDLVLFEDAMKHVCRISRIVSNPSGHALLVGVGGSGKQSLARLAAHICGYATQMIVISGSYSMNNFKEDIQKMYKRTGVKGEGVMFLFTDSQIVDERMLVYINDLLSSGEIPDLFPQEDRDEIVNALRSETKSLGLLDTAENCWATFIQKVKTNLHMVFTASPVGENFRVRSQRFLATVTSTVIDWFQPWPESSLFSVAKRFLDEVDLGEDAVANAVVEFMPYSFQLVNKVSIKFREQERRYNYTTPKTFLELIKLYKNVLAAKRKANQDNTERLENGLHKLHKVQADVDILVEEAKVKAVEVEHKVASANIFAEQVGVEKEKVNAENAAAQVEAEKCAVIAKEVSEKQASCEKDLAAAEPLVAEAMAALETVTKKDLGEAKSLKKPPPGVDDITAVVIILLENNPKDKSWQAAQKLMNNVDKFLERVKSFKSVIDAGQVARKTVDACRPYLALEWFNREAIGKKSAAAAGLCEWAVNIIKYYDVVQEVEPKRQELAAANAKLEEANVTLAAVEEKVALLNAKVQELEQQYKEANDDKEAAIRESERCQRKLELANRLINALASEGERWALTVEQLRKSYEVLTGDMLLAAAFVSYAGPFTAKFRAHVIDDWILFLRERHMPMTEGITDPLKVLVDDALVAGWIREGLPSDPTSVQNGTILTNSERWSLMMDPQLQGILWIKERESKNNLQVTRMGASNMLQVMERAIEAGHSVLVENMGETIDAVLNPIITRSTFKKGRSLYVKLGDKECEYNKNFRLFLHTKLSNPHYPPEIQAETTLINFTVTEAGLEDQLLALVVNKERPDLEETKTQLIIQNTEFTIKLKELEDGLLLKLSTAEGDITEDVALIESLEDAKRVSTEISEKVKESRETEAAINENRNKYRTVAARGAMLFFLLNSLNKIHAFYQFSLNAFVTVFSRGLDLAPGGRKKGKGLKKTPSLRDQPMDHQSLMEKARRSSGVGDRRPSQEGLPGPEASQASLAESQGGRGSQVGDAEDEDDESFAMAPEALEQRLVNLLETCTFTVYNYTRRGLFDRDKLIVLSLLTFTILLRSQAVDASEYEALCRGMRNPTPPPITDDLSRWMAESQWAALDVLTTLPCFAHLAKDMEKNSDDWFNWCNNEAAERAPMPGEWGKLTEFRQLLIIRALRPDRITNALQNFCEHMMGSDYVNQDAFSPAAMMDESSSATPIFFILFPGYSPSKEIEVYANKCGYSVANGRLCLISMGQGQEAPAEAVLDKYTREGGWVFLDNVHLMQGWIPKLERKLEIAAESAHPDFRCFFSAEPINGAPHANIIPESILQTCIKISNEPPSDMKSNMRRAFAAFTPEQCDRPSTPAKRVAFRAILFGLCFYHSLLLGRKKFGVGIGTGSGSGLGFCRGYSFNIGDLTTCGDVLYNYLEAYEQIPWRDLQYMFGEVFYGGHITDSMDRRCCTTYLEVLIRNEILPKGNPDEVEAWEAPTLELAPGFFAPKPVDYPTLKEYIETSLPAESPVVYGMHPNAELSLLTSLGETLFKTVVEVAGGGGGGGGGGGGGENAVRQALETFKERLPEPFNMVEVELRVKEKTPFVVVALQEATRMNALLSEMKRSMEELQLGLDGALNMSDNMEKLAKGIASNTVPELWMSCMSTRVQEVYTLTAWYQDVVKRHDQLSAWTAGDIITPHSVWLPGLFNPKAFLTAVMQTFARANKLPLDVMKFMTEVTRMTSPEQVTEAAPLGVYVHGLVLEGARWDREDGCLRDSKPNELHPAMPVLQVKPVTADQFNLEGYYECPVYTNMQRANVYSPVVSTFTLRTQDMPAKWVLASVALLLQDDLAG.

Positions 1-1677 (MSIFWEVPNA…RIRICDASFP (1677 aa)) are stem. 6 Kelch repeats span residues 29-84 (RFVL…ALDD), 86-135 (RLLV…RFGS), 137-183 (VFIF…RFDH), 199-245 (KLLI…VCDG), 253-304 (KVFS…FDVK), and 307-358 (SLLI…IRGL). The Filamin repeat unit spans residues 425 to 534 (FANTAARNCI…IRGSPFTVKC (110 aa)). 2 Kelch repeats span residues 562–608 (ELVL…VLSD) and 610–661 (ELVV…AVSA). Residues 653 to 720 (PKGAAAVSAE…SRPVSAKPAP (68 aa)) form a disordered region. A compositionally biased stretch (low complexity) spans 655 to 689 (GAAAVSAEPSAEPAAEPAAEPAAEPDADAPAAEPA). The segment covering 690-705 (AEGEEGAVPAEGEEGA) has biased composition (acidic residues). 2 Kelch repeats span residues 750-801 (LYVM…ATGN) and 864-913 (KLFL…TLSG). Coiled coils occupy residues 1261-1334 (ELHK…MIAN) and 1382-1450 (KKEL…RRAF). 2 AAA regions span residues 1678–1921 (YGYE…VLVV) and 1981–2225 (DVIV…KSYS). ATP-binding positions include 1716-1723 (GPAGTGKT) and 2019-2026 (GPTGTGRT). A Kelch 11 repeat occupies 2269–2317 (MIWAFGGGLVEKDGIPYRRNFDKWFKQTWTTVKIPGKGTVYDYFVNPKT). AAA regions lie at residues 2331-2577 (DYDG…VFQG) and 2679-2928 (EYNE…ERRY). ATP is bound at residue 2369 to 2376 (GGAGVGKT). Positions 2655–2688 (LADKAYDEVADYTSLYKTLTEALNEYNETNAAMD) form a coiled coil. 2717-2724 (GVGGSGKQ) serves as a coordination point for ATP. A coiled-coil region spans residues 3003 to 3023 (VGVEKEKVNAENAAAQVEAEK). The stalk stretch occupies residues 3003–3262 (VGVEKEKVNA…ERWALTVEQL (260 aa)). The stretch at 3070 to 3117 (LKKPPPGVDDITAVVIILLENNPKDKSWQAAQKLMNNVDKFLERVKSF) is one Kelch 12 repeat. 2 coiled-coil regions span residues 3170-3262 (DVVQ…VEQL) and 3486-3515 (NKER…ELED). An AAA 5 region spans residues 3320 to 3550 (LVDDALVAGW…AKRVSTEISE (231 aa)). The disordered stretch occupies residues 3614 to 3687 (GRKKGKGLKK…VGDAEDEDDE (74 aa)). A compositionally biased stretch (basic and acidic residues) spans 3630 to 3653 (QPMDHQSLMEKARRSSGVGDRRPS). Positions 3843–4082 (LQNFCEHMMG…LTTCGDVLYN (240 aa)) are AAA 6.

Belongs to the dynein heavy chain family. Consists of at least 3 heavy chains (alpha, beta and gamma), 2 intermediate chains and 8 light chains.

It localises to the cell projection. Its subcellular location is the cilium. It is found in the flagellum. The protein resides in the cytoplasm. The protein localises to the cytoskeleton. It localises to the flagellum axoneme. Functionally, force generating protein of eukaryotic cilia and flagella. Produces force towards the minus ends of microtubules. Dynein has ATPase activity; the force-producing power stroke is thought to occur on release of ADP. The protein is Dynein alpha chain, flagellar outer arm (ODA11) of Chlamydomonas reinhardtii (Chlamydomonas smithii).